The sequence spans 270 residues: NAD kinase (270 aa).

D45 acts as the Proton acceptor in catalysis. NAD(+) contacts are provided by residues 45 to 46, 121 to 122, R147, D149, 160 to 165, and A184; these read DG, NE, and TAYNKS.

Belongs to the NAD kinase family. A divalent metal cation serves as cofactor.

The protein resides in the cytoplasm. The catalysed reaction is NAD(+) + ATP = ADP + NADP(+) + H(+). Its function is as follows. Involved in the regulation of the intracellular balance of NAD and NADP, and is a key enzyme in the biosynthesis of NADP. Catalyzes specifically the phosphorylation on 2'-hydroxyl of the adenosine moiety of NAD to yield NADP. This chain is NAD kinase, found in Limosilactobacillus reuteri subsp. reuteri (strain JCM 1112) (Lactobacillus reuteri).